The sequence spans 431 residues: Adenylosuccinate synthetase (431 aa).

Residues 13 to 19 (GDEGKGK) and 41 to 43 (GHT) each bind GTP. The active-site Proton acceptor is Asp14. Asp14 and Gly41 together coordinate Mg(2+). IMP is bound by residues 14–17 (DEGK), 39–42 (NAGH), Thr130, Arg144, Gln225, Thr240, and Arg304. The active-site Proton donor is the His42. Position 300-306 (300-306 (ATTGRKR)) interacts with substrate. Residues Arg306, 332-334 (KLD), and 415-417 (STG) each bind GTP.

Belongs to the adenylosuccinate synthetase family. Homodimer. Mg(2+) is required as a cofactor.

Its subcellular location is the cytoplasm. It catalyses the reaction IMP + L-aspartate + GTP = N(6)-(1,2-dicarboxyethyl)-AMP + GDP + phosphate + 2 H(+). Its pathway is purine metabolism; AMP biosynthesis via de novo pathway; AMP from IMP: step 1/2. Functionally, plays an important role in the de novo pathway of purine nucleotide biosynthesis. Catalyzes the first committed step in the biosynthesis of AMP from IMP. The sequence is that of Adenylosuccinate synthetase from Shewanella woodyi (strain ATCC 51908 / MS32).